The following is a 245-amino-acid chain: Chloride intracellular channel protein 2 (245 aa).

The interval 1–96 (MASLALNTQA…EEFLEKTLAP (96 aa)) is required for insertion into the membrane. E25 contributes to the glutathione binding site. The G-site signature appears at 30–33 (CPFC). A disulfide bond links C30 and C33. A helical membrane pass occupies residues 32-52 (FCQRLFMILWLKGVKFNVTTI). Residues 76 to 239 (NKELKTDFIK…PEDKEIENTY (164 aa)) form the GST C-terminal domain. H227 contacts glutathione.

The protein belongs to the chloride channel CLIC family. In terms of assembly, monomer. Interacts with TRAPPC2 and RYR2.

Its subcellular location is the cytoplasm. It is found in the membrane. The enzyme catalyses chloride(in) = chloride(out). It catalyses the reaction tert-butyl hydroperoxide + 2 glutathione = tert-butanol + glutathione disulfide + H2O. It carries out the reaction cumene hydroperoxide + 2 glutathione = 2-phenylpropan-2-ol + glutathione disulfide + H2O. In the soluble state, catalyzes glutaredoxin-like thiol disulfide exchange reactions with reduced glutathione as electron donor. Displays weak glutathione peroxidase activity. Can insert into membranes and form chloride ion channels. Membrane insertion seems to be redox-regulated and may occur only under oxidizing conditions. Modulates the activity of RYR2 and inhibits calcium influx. In Rattus norvegicus (Rat), this protein is Chloride intracellular channel protein 2.